Here is a 197-residue protein sequence, read N- to C-terminus: Thymidine kinase (197 aa).

ATP is bound by residues Gly15 to Thr22 and Asp93 to Gln96. Catalysis depends on Glu94, which acts as the Proton acceptor. Positions 150, 153, 188, and 191 each coordinate Zn(2+).

Belongs to the thymidine kinase family. Homotetramer.

It is found in the cytoplasm. It catalyses the reaction thymidine + ATP = dTMP + ADP + H(+). The sequence is that of Thymidine kinase from Thermococcus kodakarensis (strain ATCC BAA-918 / JCM 12380 / KOD1) (Pyrococcus kodakaraensis (strain KOD1)).